We begin with the raw amino-acid sequence, 101 residues long: Small ribosomal subunit protein uS14 (101 aa).

The protein belongs to the universal ribosomal protein uS14 family. In terms of assembly, part of the 30S ribosomal subunit. Contacts proteins S3 and S10.

Its function is as follows. Binds 16S rRNA, required for the assembly of 30S particles and may also be responsible for determining the conformation of the 16S rRNA at the A site. This is Small ribosomal subunit protein uS14 from Tropheryma whipplei (strain TW08/27) (Whipple's bacillus).